A 248-amino-acid polypeptide reads, in one-letter code: 5'-nucleotidase SurE (248 aa).

Positions 8, 9, 39, and 91 each coordinate a divalent metal cation.

This sequence belongs to the SurE nucleotidase family. It depends on a divalent metal cation as a cofactor.

Its subcellular location is the cytoplasm. It carries out the reaction a ribonucleoside 5'-phosphate + H2O = a ribonucleoside + phosphate. In terms of biological role, nucleotidase that shows phosphatase activity on nucleoside 5'-monophosphates. This is 5'-nucleotidase SurE from Pseudoalteromonas atlantica (strain T6c / ATCC BAA-1087).